Reading from the N-terminus, the 757-residue chain is Xylosyl- and glucuronyltransferase LARGE1 (757 aa).

Residues Met1–Lys10 lie on the Cytoplasmic side of the membrane. The chain crosses the membrane as a helical; Signal-anchor for type II membrane protein span at residues Phe11–Ser31. Residues Ala32–Ser757 are Lumenal-facing. Residues Ala50 to Thr82 are a coiled coil. A disordered region spans residues Arg76–Cys127. Positions Thr82 to His97 are enriched in low complexity. Residues Asn123 and Asn149 are each glycosylated (N-linked (GlcNAc...) asparagine). The tract at residues Ile139 to Arg414 is xylosyltransferase activity. Residues Asp243 and Asp245 each contribute to the Mn(2+) site. An N-linked (GlcNAc...) asparagine glycan is attached at Asn273. The interval Arg415–Ser757 is glucuronyltransferase activity. The Mn(2+) site is built by Asp564 and Asp566. An N-linked (GlcNAc...) asparagine glycan is attached at Asn738.

This sequence in the C-terminal section; belongs to the glycosyltransferase 49 family. The protein in the N-terminal section; belongs to the glycosyltransferase 8 family. The cofactor is Mn(2+).

It is found in the golgi apparatus membrane. It catalyses the reaction 3-O-[beta-D-GlcA-(1-&gt;3)-beta-D-Xyl-(1-&gt;4)-Rib-ol-P-Rib-ol-P-3-beta-D-GalNAc-(1-&gt;3)-beta-D-GlcNAc-(1-&gt;4)-(O-6-P-alpha-D-Man)]-Thr-[protein] + UDP-alpha-D-xylose = 3-O-[alpha-D-Xyl-(1-&gt;3)-beta-D-GlcA-(1-&gt;4)-beta-D-Xyl-(1-&gt;4)-Rib-ol-P-Rib-ol-P-3-beta-D-GalNAc-(1-&gt;3)-beta-D-GlcNAc-(1-&gt;4)-(O-6-P-alpha-D-Man)]-Thr-[protein] + UDP + H(+). The catalysed reaction is 3-O-{(1-&gt;[3)-alpha-D-Xyl-(1-&gt;3)-beta-D-GlcA-(1-&gt;](n)-4)-beta-D-Xyl-(1-&gt;4)-Rib-ol-P-Rib-ol-P-3-beta-D-GalNAc-(1-&gt;3)-beta-D-GlcNAc-(1-&gt;4)-O-6-P-alpha-D-Man}-L-Thr-[protein] + UDP-alpha-D-glucuronate = 3-O-{beta-D-GlcA-(1-&gt;[3)-alpha-D-Xyl-(1-&gt;3)-beta-D-GlcA-(1-&gt;](n)-4)-beta-D-Xyl-(1-&gt;4)-Rib-ol-P-Rib-ol-P-3-beta-D-GalNAc-(1-&gt;3)-beta-D-GlcNAc-(1-&gt;4)-O-6-P-alpha-D-Man}-L-Thr-[protein] + UDP + H(+). It carries out the reaction 3-O-{beta-D-GlcA-(1-&gt;[3)-alpha-D-Xyl-(1-&gt;3)-beta-D-GlcA-(1-&gt;](n)-4)-beta-D-Xyl-(1-&gt;4)-Rib-ol-P-Rib-ol-P-3-beta-D-GalNAc-(1-&gt;3)-beta-D-GlcNAc-(1-&gt;4)-O-6-P-alpha-D-Man}-L-Thr-[protein] + UDP-alpha-D-xylose = 3-O-{(1-&gt;[3)-alpha-D-Xyl-(1-&gt;3)-beta-D-GlcA-(1-&gt;](n+1)-4)-beta-D-Xyl-(1-&gt;4)-Rib-ol-P-Rib-ol-P-3-beta-D-GalNAc-(1-&gt;3)-beta-D-GlcNAc-(1-&gt;4)-O-6-P-alpha-D-Man}-L-Thr-[protein] + UDP + H(+). It participates in protein modification; protein glycosylation. In terms of biological role, bifunctional glycosyltransferase with both alpha-1,3-xylosyltransferase and beta-1,3-glucuronyltransferase activities involved in the maturation of alpha-dystroglycan (DAG1) by glycosylation leading to DAG1 binding to laminin G-like domain-containing extracellular proteins with high affinity. Elongates the glucuronyl-beta-1,4-xylose-beta disaccharide primer structure initiated by B4GAT1 by adding repeating units [-3-Xylose-alpha-1,3-GlcA-beta-1-] to produce a heteropolysaccharide. Requires the phosphorylation of core M3 (O-mannosyl trisaccharide) by POMK to elongate the glucuronyl-beta-1,4-xylose-beta disaccharide primer. Plays a key role in skeletal muscle function and regeneration. This Danio rerio (Zebrafish) protein is Xylosyl- and glucuronyltransferase LARGE1.